Consider the following 211-residue polypeptide: Allatostatins MIP (211 aa).

Positions 1–24 are cleaved as a signal peptide; the sequence is MAHTKTRRTYGFLMVLLILGSACG. Positions 25 to 63 are excised as a propeptide; it reads NLVASGSAGSPPSNEPGGGGLSEQVVLDQLSESDLYGNN. Tryptophan 74 bears the Tryptophan amide mark. A propeptide spanning residues 78 to 148 is cleaved from the precursor; the sequence is SSSGDVSDPD…DDLAGEPDVE (71 aa). Low complexity predominate over residues 115–135; it reads ASGQSAQQQQQQPLQQQSQSG. Positions 115–142 are disordered; that stretch reads ASGQSAQQQQQQPLQQQSQSGEDFDDLA. Tryptophan amide occurs at positions 159, 175, 189, and 202. A disordered region spans residues 168-190; the sequence is WNKFRGAWGKREPTWNNLKGMWG. The propeptide occupies 206 to 211; it reads SQLPSN.

In larvae, strongly expressed in the midgut region before and in between the copper cells, and in a group of cells in the posterior part of the larval midgut. Expressed in the neurons of many areas including the subesophageal ganglion/tritocerebrum (SOG), olfactory glomeruli, lateral ventral protocerebrum, mushroom body, the optic lobe medulla and in the antennal lobes.

It is found in the secreted. Ligand for the sex peptide receptor (SPR). Stabilizes sleep and maintains sleep homeostasis to inhibit the activity of wake-promoting circuits, such as those that involve the pigment dispersing factor (pdf) neurons. Regulated by the circadian clock network and pathways associated with a sleep homeostat. May also have a regulatory role in gut motility. The sequence is that of Allatostatins MIP (Mip) from Drosophila melanogaster (Fruit fly).